Reading from the N-terminus, the 312-residue chain is NAD(P)(+)--arginine ADP-ribosyltransferase 1 (312 aa).

Positions 1 to 20 (MELLALRWVLLAGTLLSTSA) are cleaved as a signal peptide. The propeptide occupies 21–31 (ASSALQEGDLG). 2 disulfide bridges follow: cysteine 51/cysteine 260 and cysteine 159/cysteine 208. Positions 71–256 (IAYAVTWRQA…IQLHSKGKMS (186 aa)) constitute a TR mART core domain. The NAD(+) site is built by tyrosine 108, arginine 164, and glutamine 183. Arginine 164 is an active-site residue. The active site involves serine 186. Serine 217 lines the NAD(+) pocket. The active site involves glutamate 224. A propeptide spanning residues 267-312 (GGQWGRGHQEVGLGLSPGLSLPVLPCRRRVWEGLGHREGDPIPAAV) is cleaved from the precursor.

It belongs to the Arg-specific ADP-ribosyltransferase family.

It localises to the secreted. It is found in the extracellular space. The enzyme catalyses L-arginyl-[protein] + NAD(+) = N(omega)-(ADP-D-ribosyl)-L-arginyl-[protein] + nicotinamide + H(+). The polypeptide is NAD(P)(+)--arginine ADP-ribosyltransferase 1 (Gallus gallus (Chicken)).